The chain runs to 212 residues: Ras-related protein Rab-15 (212 aa).

GTP-binding residues include S17, G18, V19, G20, K21, T22, C23, S35, S39, and T40. T22 contacts Mg(2+). 2 short sequence motifs (switch) span residues N31–F45 and D63–R80. 2 residues coordinate Mg(2+): T40 and D63. The GTP site is built by G66, N121, K122, D124, S151, and A152. Residues E192–C212 are disordered. S-geranylgeranyl cysteine attachment occurs at residues C210 and C212. C212 carries the post-translational modification Cysteine methyl ester.

This sequence belongs to the small GTPase superfamily. Rab family. As to quaternary structure, the GTP bound form of RAB15 interacts with REP15. Interacts (GTP-bound form) with MICAL1, MICAL3, MICALCL, EHBP1 and EHBP1L1. Mg(2+) serves as cofactor.

The protein localises to the cell membrane. It catalyses the reaction GTP + H2O = GDP + phosphate + H(+). Regulated by guanine nucleotide exchange factors (GEFs) which promote the exchange of bound GDP for free GTP. Regulated by GTPase activating proteins (GAPs) which increase the GTP hydrolysis activity. Inhibited by GDP dissociation inhibitors (GDIs). Functionally, the small GTPases Rab are key regulators of intracellular membrane trafficking, from the formation of transport vesicles to their fusion with membranes. Rabs cycle between an inactive GDP-bound form and an active GTP-bound form that is able to recruit to membranes different sets of downstream effectors directly responsible for vesicle formation, movement, tethering and fusion. RAB15 may act in concert with RAB3A in regulating aspects of synaptic vesicle membrane flow within the nerve terminal. In Mus musculus (Mouse), this protein is Ras-related protein Rab-15.